Reading from the N-terminus, the 192-residue chain is dTTP/UTP pyrophosphatase (192 aa).

Catalysis depends on aspartate 72, which acts as the Proton acceptor.

This sequence belongs to the Maf family. YhdE subfamily. Requires a divalent metal cation as cofactor.

It is found in the cytoplasm. The enzyme catalyses dTTP + H2O = dTMP + diphosphate + H(+). The catalysed reaction is UTP + H2O = UMP + diphosphate + H(+). Nucleoside triphosphate pyrophosphatase that hydrolyzes dTTP and UTP. May have a dual role in cell division arrest and in preventing the incorporation of modified nucleotides into cellular nucleic acids. The chain is dTTP/UTP pyrophosphatase from Hydrogenovibrio crunogenus (strain DSM 25203 / XCL-2) (Thiomicrospira crunogena).